We begin with the raw amino-acid sequence, 134 residues long: uncharacterized protein (134 aa).

This is an uncharacterized protein from Ictaluridae (bullhead catfishes).